We begin with the raw amino-acid sequence, 179 residues long: Large ribosomal subunit protein uL5 (179 aa).

The protein belongs to the universal ribosomal protein uL5 family. Part of the 50S ribosomal subunit; part of the 5S rRNA/L5/L18/L25 subcomplex. Contacts the 5S rRNA and the P site tRNA. Forms a bridge to the 30S subunit in the 70S ribosome.

In terms of biological role, this is one of the proteins that bind and probably mediate the attachment of the 5S RNA into the large ribosomal subunit, where it forms part of the central protuberance. In the 70S ribosome it contacts protein S13 of the 30S subunit (bridge B1b), connecting the 2 subunits; this bridge is implicated in subunit movement. Contacts the P site tRNA; the 5S rRNA and some of its associated proteins might help stabilize positioning of ribosome-bound tRNAs. In Bdellovibrio bacteriovorus (strain ATCC 15356 / DSM 50701 / NCIMB 9529 / HD100), this protein is Large ribosomal subunit protein uL5.